A 378-amino-acid chain; its full sequence is Prolargin (378 aa).

The N-terminal stretch at methionine 1–glycine 21 is a signal peptide. The disordered stretch occupies residues glutamine 22–proline 62. Over residues proline 28–proline 38 the composition is skewed to basic residues. The segment covering threonine 39–proline 62 has biased composition (pro residues). 12 LRR repeats span residues arginine 91–isoleucine 110, threonine 111–isoleucine 134, arginine 135–leucine 158, glutamate 159–isoleucine 179, serine 180–leucine 203, serine 204–leucine 229, arginine 230–isoleucine 250, glutamate 251–leucine 274, serine 275–isoleucine 299, serine 300–isoleucine 319, glutamate 320–leucine 358, and lysine 359–isoleucine 378. Asparagine 120 carries N-linked (GlcNAc...) asparagine glycosylation. N-linked (GlcNAc...) asparagine glycans are attached at residues asparagine 285, asparagine 316, and asparagine 323. A disulfide bridge links cysteine 328 with cysteine 369.

This sequence belongs to the small leucine-rich proteoglycan (SLRP) family. SLRP class II subfamily. Binds the basement membrane heparan sulfate proteoglycan perlecan and triple helical collagens type I and type II. Post-translationally, glycosylated; contains heparan sulfate. In terms of tissue distribution, expressed in cartilage throughout both fetal development and postnatal life. It is also expressed in the developing embryo prior to skeletogenesis. In adult, highest expression in lung, lower levels in cardiac and skeletal muscle.

Its subcellular location is the secreted. The protein localises to the extracellular space. It is found in the extracellular matrix. In terms of biological role, may anchor basement membranes to the underlying connective tissue. In Mus musculus (Mouse), this protein is Prolargin (Prelp).